The following is a 375-amino-acid chain: MSQRDYYEVLGVSRDAADDEIKRAYRKKAMEFHPDRNPDNPEAEAKFKEAAEAYDVLRDAEKRARYDRFGHAGVNGNGYGGGGGFSSTEDIFAHFGDIFGDLFGFAGMGGARGPRPQAGSDLRYNLNISFRQAARGDEVTLRIPKNVTCPDCSGSGAAPGTQPETCPQCGGSGQVVRQQGFFQMAMPCSACRGEGRIVRNPCPRCRGAGQVQDIRELSVRIPAGVDTGNRLRLRGEGEPGVHGGPPGDLYVVIRVDDDKTFRRQGQDLVVRKEISFVQAILGDKVEVPTLDDPVTVDIPRGTQSGEVFRIAGKGLPHLGSSQTGALLVEVTVRIPSSVNDEQEKLLREFERLEENRPLRKVKNMFKKAGKAMGMD.

A J domain is found at 5–70; that stretch reads DYYEVLGVSR…EKRARYDRFG (66 aa). The CR-type zinc-finger motif lies at 136-214; the sequence is GDEVTLRIPK…CRGAGQVQDI (79 aa). Zn(2+) is bound by residues cysteine 149, cysteine 152, cysteine 166, cysteine 169, cysteine 188, cysteine 191, cysteine 202, and cysteine 205. CXXCXGXG motif repeat units lie at residues 149 to 156, 166 to 173, 188 to 195, and 202 to 209; these read CPDCSGSG, CPQCGGSG, CSACRGEG, and CPRCRGAG.

It belongs to the DnaJ family. As to quaternary structure, homodimer. Zn(2+) serves as cofactor.

The protein resides in the cytoplasm. Participates actively in the response to hyperosmotic and heat shock by preventing the aggregation of stress-denatured proteins and by disaggregating proteins, also in an autonomous, DnaK-independent fashion. Unfolded proteins bind initially to DnaJ; upon interaction with the DnaJ-bound protein, DnaK hydrolyzes its bound ATP, resulting in the formation of a stable complex. GrpE releases ADP from DnaK; ATP binding to DnaK triggers the release of the substrate protein, thus completing the reaction cycle. Several rounds of ATP-dependent interactions between DnaJ, DnaK and GrpE are required for fully efficient folding. Also involved, together with DnaK and GrpE, in the DNA replication of plasmids through activation of initiation proteins. This Oleidesulfovibrio alaskensis (strain ATCC BAA-1058 / DSM 17464 / G20) (Desulfovibrio alaskensis) protein is Chaperone protein DnaJ.